The primary structure comprises 239 residues: Ribonuclease P protein component 3 (239 aa).

Belongs to the eukaryotic/archaeal RNase P protein component 3 family. In terms of assembly, consists of a catalytic RNA component and at least 4-5 protein subunits.

It localises to the cytoplasm. It carries out the reaction Endonucleolytic cleavage of RNA, removing 5'-extranucleotides from tRNA precursor.. In terms of biological role, part of ribonuclease P, a protein complex that generates mature tRNA molecules by cleaving their 5'-ends. The sequence is that of Ribonuclease P protein component 3 from Methanosarcina barkeri (strain Fusaro / DSM 804).